A 115-amino-acid polypeptide reads, in one-letter code: Probable mycobacterial cidal antitoxin Rv3188 (115 aa).

Belongs to the MbcA/ParS/Xre antitoxin family. In terms of assembly, forms a heterotetramer with cognate toxin Rv3189.

Functionally, probable antitoxin component of a type II toxin-antitoxin (TA) system. Neutralizes the activity of cognate toxin Rv3189 by blocking access to the toxin active site. The chain is Probable mycobacterial cidal antitoxin Rv3188 from Mycobacterium tuberculosis (strain ATCC 25618 / H37Rv).